The chain runs to 347 residues: 4-hydroxy-2-oxovalerate aldolase (347 aa).

The region spanning 2–252 (ILISDATLRD…DTRTTFERVM (251 aa)) is the Pyruvate carboxyltransferase domain. 10–11 (RD) contacts substrate. D11 provides a ligand contact to Mn(2+). The Proton acceptor role is filled by H14. Residues S164 and H191 each coordinate substrate. The Mn(2+) site is built by H191 and H193.

This sequence belongs to the 4-hydroxy-2-oxovalerate aldolase family.

It catalyses the reaction (S)-4-hydroxy-2-oxopentanoate = acetaldehyde + pyruvate. The chain is 4-hydroxy-2-oxovalerate aldolase (mhpE) from Burkholderia pseudomallei (strain K96243).